A 263-amino-acid polypeptide reads, in one-letter code: MAWRYSQLLLVPVQLVFLASVCCPGVWGSTVSEELHRMVGQSLSVQCQYKPKEESYVLKTWCRQTAPSKCTRVVTTSEPRKAARELQHTIWDDPEAGFFNITMTQLTEDDSAFYWCGPYYPSLREVTVLRNISLVVSPAPSTLPSQTIAPLPESTATIFMPFPVLTTSPEETTDSSINGTGHRNQSSSSPGWTSPGLLVSVQYGLLLLKALMLSVFCVLLCWRSGQGREYMAETMELSKLPHISKSLDTVSHISGYEKKANWY.

Positions 1–28 (MAWRYSQLLLVPVQLVFLASVCCPGVWG) are cleaved as a signal peptide. The region spanning 29–132 (STVSEELHRM…LREVTVLRNI (104 aa)) is the Ig-like V-type domain. At 29–200 (STVSEELHRM…GWTSPGLLVS (172 aa)) the chain is on the extracellular side. A disulfide bridge connects residues C47 and C116. N100 carries N-linked (GlcNAc...) asparagine glycosylation. Residues 168-191 (SPEETTDSSINGTGHRNQSSSSPG) form a disordered region. A helical transmembrane segment spans residues 201–221 (VQYGLLLLKALMLSVFCVLLC). Residues 222 to 263 (WRSGQGREYMAETMELSKLPHISKSLDTVSHISGYEKKANWY) are Cytoplasmic-facing.

Interacts with TYROBP/DAP12. As to expression, predominantly expressed in spleen, with highest levels on selected populations of macrophages, including red pulp macrophages, and on subsets of dendritic cells (DC), mostly on CD8alpha(+) DC (at protein level). Also expressed on blood and spleen Ly6C(low) monocytes (at protein level). Not expressed on lymphocytes or granulocytes (at protein level).

It is found in the cell membrane. Positively regulates Toll-like receptor signaling via TLR7, TLR9 and TLR13 in neutrophils and splenic macrophages. Regulates TLR7 signaling by controlling ligand-induced recruitment of TLR7 from the endoplasmic reticulum to endosomes and lysosomes. Positively regulates Toll-like receptor TLR9-induced production of inflammatory cytokines but is dispensable for IFNB1 production. Involved in the anti-viral response to several viruses including influenza virus, vesicular stomatitis virus and cytomegalovirus. Binds to late apoptotic, and necrotic cells, but not living or early apoptotic cells, but is not essential for uptake of dying cells by dendritic cells (DCs). Does not bind nucleic acids. May participate in antigen presentation. The protein is Trem-like transcript 4 protein (Treml4) of Mus musculus (Mouse).